A 620-amino-acid polypeptide reads, in one-letter code: MSFDIAKYPTLALVDSTQELRLLPNESLPKLCDELRRYLLDSVSRSSGHFASGLGTVELTVALHYVYNTPFDQLIWDVGHQAYPHKILTGRRDKIGTIRQKGGLHPFPWRGESEYDVLSVGHSSTSISAGIGIAVAAEKEGKNRRTVCVIGDGAITAGMAFEAMNHAGDIRPDMLVVLNDNEMSISENVGALNNHLAQLLSGKLYSSLREGGKKVFSGVPPIKELLKRTEEHIKGMVVPGTLFEELGFNYIGPVDGHDVLGLITTLKNMRDLKGPQFLHIMTKKGRGYEPAEKDPITFHAVPKFDPSSGCLPKSSGGLPSYSKIFGDWLCETAAKDNKLMAITPAMREGSGMVEFSRKFPDRYFDVAIAEQHAVTFAAGLAIGGYKPIVAIYSTFLQRAYDQVLHDVAIQKLPVLFAIDRAGIVGADGQTHQGAFDLSYLRCIPEMVIMTPSDENECRQMLYTGYHYNDGPSAVRYPRGNAVGVELTPLEKLPIGKGIVKRRGEKLVILNFGTLMPETAKVAESLNATLVDMRFVKPLDEALILEMAASHEALVTVEENAIMGGAGSGVNEVLMAHRKPVPVLNIGLPDFFIPQGTQEEMRAELGLDAAGMEAKIKAWLA.

Residues His80 and Gly121–Ser123 contribute to the thiamine diphosphate site. Asp152 lines the Mg(2+) pocket. Thiamine diphosphate is bound by residues Gly153–Ala154, Asn181, Tyr288, and Glu370. Asn181 is a Mg(2+) binding site.

Belongs to the transketolase family. DXPS subfamily. In terms of assembly, homodimer. Requires Mg(2+) as cofactor. The cofactor is thiamine diphosphate.

It carries out the reaction D-glyceraldehyde 3-phosphate + pyruvate + H(+) = 1-deoxy-D-xylulose 5-phosphate + CO2. The protein operates within metabolic intermediate biosynthesis; 1-deoxy-D-xylulose 5-phosphate biosynthesis; 1-deoxy-D-xylulose 5-phosphate from D-glyceraldehyde 3-phosphate and pyruvate: step 1/1. Its function is as follows. Catalyzes the acyloin condensation reaction between C atoms 2 and 3 of pyruvate and glyceraldehyde 3-phosphate to yield 1-deoxy-D-xylulose-5-phosphate (DXP). In Shigella flexneri, this protein is 1-deoxy-D-xylulose-5-phosphate synthase.